The sequence spans 99 residues: Aspartyl/glutamyl-tRNA(Asn/Gln) amidotransferase subunit C (99 aa).

This sequence belongs to the GatC family. Heterotrimer of A, B and C subunits.

It catalyses the reaction L-glutamyl-tRNA(Gln) + L-glutamine + ATP + H2O = L-glutaminyl-tRNA(Gln) + L-glutamate + ADP + phosphate + H(+). The catalysed reaction is L-aspartyl-tRNA(Asn) + L-glutamine + ATP + H2O = L-asparaginyl-tRNA(Asn) + L-glutamate + ADP + phosphate + 2 H(+). Its function is as follows. Allows the formation of correctly charged Asn-tRNA(Asn) or Gln-tRNA(Gln) through the transamidation of misacylated Asp-tRNA(Asn) or Glu-tRNA(Gln) in organisms which lack either or both of asparaginyl-tRNA or glutaminyl-tRNA synthetases. The reaction takes place in the presence of glutamine and ATP through an activated phospho-Asp-tRNA(Asn) or phospho-Glu-tRNA(Gln). The sequence is that of Aspartyl/glutamyl-tRNA(Asn/Gln) amidotransferase subunit C from Albidiferax ferrireducens (strain ATCC BAA-621 / DSM 15236 / T118) (Rhodoferax ferrireducens).